A 462-amino-acid polypeptide reads, in one-letter code: Cysteine proteinase RD21A (462 aa).

The first 21 residues, 1–21 (MGFLKPTMAILFLAMVAVSSA), serve as a signal peptide directing secretion. Residues 22–136 (VDMSIISYDE…LRYEARVGDE (115 aa)) constitute a propeptide, activation peptide. N-linked (GlcNAc...) asparagine glycosylation occurs at Asn-90. 5 disulfide bridges follow: Cys-158-Cys-200, Cys-192-Cys-233, Cys-291-Cys-342, Cys-375-Cys-387, and Cys-381-Cys-402. The active site involves Cys-161. Active-site residues include His-297 and Asn-317. The propeptide at 353-462 (KNGENPPNPG…FWSQGRKNIA (110 aa)) is removed in mature form. A glycan (N-linked (GlcNAc...) asparagine) is linked at Asn-414.

It belongs to the peptidase C1 family. In terms of assembly, interacts with SERPIN1. Interacts with PRN2. Interacts with WSCP. Interacts with TZF4, TZF5 and TZF6.

The protein localises to the vacuole. The protein resides in the golgi apparatus. Its subcellular location is the cytoplasm. It localises to the stress granule. It is found in the P-body. With respect to regulation, inhibited by the cysteine protease inhibitor E64 (L-trans-epoxysuccinyl-leucylamide-(4-guanido)-butane). In terms of biological role, cysteine protease that plays a role in immunity, senescence, and biotic and abiotic stresses. Involved in immunity against the necrotrophic fungal pathogen Botrytis cinerea. Involved in elicitor-stimulated programmed cell death (PCD). During infection by the necrotrophic fungal pathogen Botrytis cinerea, functions as a PCD-promoting protease that is released from the ER body or vacuole to the cytoplasm. Accumulates in endoplasmic reticulum-derived bodies in epidermal cells and may participate in cell death in stressed or injured cells. Involved in water stress-induced cell death through its protease activity that is released to the cytoplasm after vacuolar collapse. Possesses protease activity in vitro and is involved in cell death in the transmitting tract and septum epidermis during flower development. Possesses peptide ligase activity. Can ligate peptides to unmodified N-termini of acceptor proteins. Probably ligates through a thioester intermediate. This Arabidopsis thaliana (Mouse-ear cress) protein is Cysteine proteinase RD21A.